The sequence spans 248 residues: MAVNDVNVFYGAKQAIKNVGLDIVAREVTAFIGPSGCGKSTFLRCLNRMNDTIDICKVTGDIRLDGEDVYDRHIDVVELRARVGMVFQKPNPFPKSIYENIAYGPRIHGIARGKSELDEIVQSSLERAGLWEEVKDRLESPGTGLSGGQQQRVCIARAIAVSPEVILMDEPCSALDPIATAKIEELIDELRSNYTIVIVTHSMQQAARVSQRTAFFHLGRLIECGDTETIFTNPQHNLTQGYITGRFG.

Residues 1-243 form the ABC transporter domain; the sequence is MAVNDVNVFY…PQHNLTQGYI (243 aa). 33-40 lines the ATP pocket; it reads GPSGCGKS.

The protein belongs to the ABC transporter superfamily. Phosphate importer (TC 3.A.1.7) family. The complex is composed of two ATP-binding proteins (PstB), two transmembrane proteins (PstC and PstA) and a solute-binding protein (PstS).

The protein localises to the cell inner membrane. The catalysed reaction is phosphate(out) + ATP + H2O = ADP + 2 phosphate(in) + H(+). Its function is as follows. Part of the ABC transporter complex PstSACB involved in phosphate import. Responsible for energy coupling to the transport system. In Rhodospirillum rubrum (strain ATCC 11170 / ATH 1.1.1 / DSM 467 / LMG 4362 / NCIMB 8255 / S1), this protein is Phosphate import ATP-binding protein PstB.